The primary structure comprises 307 residues: F-box protein PP2-B7 (307 aa).

Positions 37–83 (PLSLGDLPEECISLIISFTSPRDACVFALVSKTFESAVQSDIVWEKF) constitute an F-box domain.

The protein is F-box protein PP2-B7 (PP2B7) of Arabidopsis thaliana (Mouse-ear cress).